The primary structure comprises 91 residues: Early E3B 10.4 kDa protein (91 aa).

Residues 1–22 (MIPRVFILLTLVALFCACSTLA) form the signal peptide. The Lumenal portion of the chain corresponds to 23 to 34 (AVSHIEVDCIPA). The chain crosses the membrane as a helical span at residues 35 to 60 (FTVYLLYGFVTLTLICSLITVVIAFI). Residues 61–91 (QCIDWVCVRFAYLRHHPQYRDRTIAELLRIL) lie on the Cytoplasmic side of the membrane.

It belongs to the adenoviridae E3B family.

The protein resides in the host endoplasmic reticulum membrane. Its function is as follows. Down-regulates the EGF receptor. The protein is Early E3B 10.4 kDa protein of Homo sapiens (Human).